The sequence spans 159 residues: Large ribosomal subunit protein uL30 (159 aa).

Belongs to the universal ribosomal protein uL30 family. Part of the 50S ribosomal subunit.

This Aeropyrum pernix (strain ATCC 700893 / DSM 11879 / JCM 9820 / NBRC 100138 / K1) protein is Large ribosomal subunit protein uL30.